Reading from the N-terminus, the 326-residue chain is Glyoxylate/hydroxypyruvate reductase B (326 aa).

Residues Arg-237 and Glu-266 contribute to the active site. His-285 acts as the Proton donor in catalysis.

Belongs to the D-isomer specific 2-hydroxyacid dehydrogenase family. GhrB subfamily. In terms of assembly, homodimer.

It is found in the cytoplasm. It catalyses the reaction glycolate + NADP(+) = glyoxylate + NADPH + H(+). It carries out the reaction (R)-glycerate + NAD(+) = 3-hydroxypyruvate + NADH + H(+). The catalysed reaction is (R)-glycerate + NADP(+) = 3-hydroxypyruvate + NADPH + H(+). Its function is as follows. Catalyzes the NADPH-dependent reduction of glyoxylate and hydroxypyruvate into glycolate and glycerate, respectively. The chain is Glyoxylate/hydroxypyruvate reductase B from Yersinia pseudotuberculosis serotype O:3 (strain YPIII).